A 76-amino-acid chain; its full sequence is RNA-binding protein KhpA (76 aa).

One can recognise a KH domain in the interval 29 to 76 (QNIIELRVSPKDVGKVIGKNGRIAKSLRAILTAASVKAGKNFSLEIID).

It belongs to the KhpA RNA-binding protein family. In terms of assembly, forms a complex with KhpB.

Its subcellular location is the cytoplasm. Functionally, a probable RNA chaperone. Forms a complex with KhpB which binds to cellular RNA and controls its expression. Plays a role in peptidoglycan (PG) homeostasis and cell length regulation. The protein is RNA-binding protein KhpA of Leptospira interrogans serogroup Icterohaemorrhagiae serovar copenhageni (strain Fiocruz L1-130).